The sequence spans 425 residues: MMKLEMVCTGEEVLSGQIVDTNAAWFASTMMEHGIEIQRRVTVGDRLEDLIAVFQERSLHADVILVNGGLGPTSDDMSAEAMAKAKGESLVENREWRQHLEDWFTRNNREMPVSNLKQAMLPESAVMVDNPVGTACGFRVKLNRAWLFFTPGVPFELKHMVKEQFIPFIREEFGLDAKVALKKLLTIGHGESSLADKIEPLELPEGITIGYRSSMPHIEIKIFARGEKAIALLPRVTGHIKMVLGTAVVAEDKATLAEEIHAKLLNSGLTLSVAESCTGGMITSQLVDFPGSSSYLQHGLVTYSNESKVRVLGVNPATLDDHGAVSIPTVEEMAKGARAILDSDFALATSGIAGPDGGTEEKPVGTVAIALATRSGVYSQMIKLPRRSRDLVRSLSAAVAYDMLRRELLTEAVIVDYQSIGRFSK.

Belongs to the CinA family.

This is CinA-like protein from Shewanella sp. (strain MR-4).